The sequence spans 278 residues: Secoisolariciresinol dehydrogenase (278 aa).

Residues G23–I28, D47, V73, and N99 each bind NAD(+). The substrate site is built by S104 and S164. Y167 (proton donor/acceptor) is an active-site residue. Positions 171 and 200 each coordinate NAD(+).

It belongs to the short-chain dehydrogenases/reductases (SDR) family. Homotetramer. In terms of tissue distribution, mostly expressed in stems and rhizomes, and, to a lower extent, in leaves.

It catalyses the reaction (-)-secoisolariciresinol + 2 NAD(+) = (-)-matairesinol + 2 NADH + 2 H(+). It functions in the pathway aromatic compound metabolism; phenylpropanoid biosynthesis. In terms of biological role, oxidoreductase involved in lignan biosynthesis. Also involved in the biosynthesis of etoposide, a chemotherapeutic compound of the topoisomerase inhibitor family. Catalyzes the stereospecific conversion of (-)-secoisolariciresinol to (-)-matairesinol via a lactol intermediate. In Sinopodophyllum hexandrum (Himalayan may apple), this protein is Secoisolariciresinol dehydrogenase.